We begin with the raw amino-acid sequence, 269 residues long: Tryptophan synthase alpha chain (269 aa).

Catalysis depends on proton acceptor residues glutamate 49 and aspartate 60.

This sequence belongs to the TrpA family. In terms of assembly, tetramer of two alpha and two beta chains.

It catalyses the reaction (1S,2R)-1-C-(indol-3-yl)glycerol 3-phosphate + L-serine = D-glyceraldehyde 3-phosphate + L-tryptophan + H2O. It functions in the pathway amino-acid biosynthesis; L-tryptophan biosynthesis; L-tryptophan from chorismate: step 5/5. In terms of biological role, the alpha subunit is responsible for the aldol cleavage of indoleglycerol phosphate to indole and glyceraldehyde 3-phosphate. The sequence is that of Tryptophan synthase alpha chain from Pseudomonas putida (strain W619).